Here is a 353-residue protein sequence, read N- to C-terminus: Photosystem II D2 protein (353 aa).

At Thr-2 the chain carries N-acetylthreonine. Position 2 is a phosphothreonine (Thr-2). Residues 41-61 form a helical membrane-spanning segment; it reads CAYFAVGGWFTGTTFVTSWYT. His-118 is a chlorophyll a binding site. Residues 125 to 141 form a helical membrane-spanning segment; the sequence is GFMLRQFELARSVQLRP. 2 residues coordinate pheophytin a: Gln-130 and Asn-143. Residues 153–166 form a helical membrane-spanning segment; it reads VFVSVFLIYPLGQS. His-198 is a chlorophyll a binding site. A helical membrane pass occupies residues 208–228; the sequence is AALLCAIHGATVENTLFEDGD. A plastoquinone-binding residues include His-215 and Phe-262. Position 215 (His-215) interacts with Fe cation. His-269 contributes to the Fe cation binding site. A helical membrane pass occupies residues 279-295; that stretch reads GLWMSALGVVGLALNLR.

This sequence belongs to the reaction center PufL/M/PsbA/D family. PSII is composed of 1 copy each of membrane proteins PsbA, PsbB, PsbC, PsbD, PsbE, PsbF, PsbH, PsbI, PsbJ, PsbK, PsbL, PsbM, PsbT, PsbX, PsbY, PsbZ, Psb30/Ycf12, at least 3 peripheral proteins of the oxygen-evolving complex and a large number of cofactors. It forms dimeric complexes. The D1/D2 heterodimer binds P680, chlorophylls that are the primary electron donor of PSII, and subsequent electron acceptors. It shares a non-heme iron and each subunit binds pheophytin, quinone, additional chlorophylls, carotenoids and lipids. There is also a Cl(-1) ion associated with D1 and D2, which is required for oxygen evolution. The PSII complex binds additional chlorophylls, carotenoids and specific lipids. serves as cofactor.

It localises to the plastid. Its subcellular location is the chloroplast thylakoid membrane. The catalysed reaction is 2 a plastoquinone + 4 hnu + 2 H2O = 2 a plastoquinol + O2. Its function is as follows. Photosystem II (PSII) is a light-driven water:plastoquinone oxidoreductase that uses light energy to abstract electrons from H(2)O, generating O(2) and a proton gradient subsequently used for ATP formation. It consists of a core antenna complex that captures photons, and an electron transfer chain that converts photonic excitation into a charge separation. The D1/D2 (PsbA/PsbD) reaction center heterodimer binds P680, the primary electron donor of PSII as well as several subsequent electron acceptors. D2 is needed for assembly of a stable PSII complex. This Ipomoea purpurea (Common morning glory) protein is Photosystem II D2 protein.